Here is an 844-residue protein sequence, read N- to C-terminus: Meiotically up-regulated gene 61 protein (844 aa).

2 disordered regions span residues 333–354 (ENNS…PQSQ) and 384–415 (NFGL…EISS). The span at 384–394 (NFGLEASNTST) shows a compositional bias: polar residues. The span at 395–407 (PEKKKFDSQKPDD) shows a compositional bias: basic and acidic residues. A helical transmembrane segment spans residues 459–479 (VVNSLWLVLLVVPLLGFVGFW). Residue 605-612 (AKNLNGKS) coordinates ATP. A helical membrane pass occupies residues 705–725 (VISCWRIYLLIGILAAITGTV).

As to quaternary structure, interacts with sad1.

Its subcellular location is the endoplasmic reticulum membrane. It is found in the nucleus membrane. Its function is as follows. Required for correct meiotic chromosome segregation. The protein is Meiotically up-regulated gene 61 protein (mug61) of Schizosaccharomyces pombe (strain 972 / ATCC 24843) (Fission yeast).